Here is a 119-residue protein sequence, read N- to C-terminus: UPF0738 protein BAA_1286 (119 aa).

The protein belongs to the UPF0738 family.

This Bacillus anthracis (strain A0248) protein is UPF0738 protein BAA_1286.